The sequence spans 1001 residues: MSGLGNKRAAGDGGSGPPEKKLSREEKTTTTLIEPIRLGGISSTEEIDLKVLQFKNKKLAERLEQRQACEDELRERIEKLEKRQATDDATLLIVNRYWAQLDETVEALLRCHEGQGELSSAPEAPGTQEGPTCDGTPLPEPGTSELREPLPLQLRPPLSEPALAFVVALGASSSEEVELELQGRMEFSKAAVSHVVEASDRLQRRVEELCQRVYSRGDSEPLSEVARARTRELGRENRRLQDLATQLQEKHHRISLEYSELQDKVTSAETKVLEMETTVEDLQWDIEKLRKREQKLNKHLAEALEQLNSGYYVSGSSSGFQGGQITLSMQKFEMLNAELEENQELANSRMAELEKLQAELQGAVRTNERLKVALRSLPEEVVRETGEYRMLQAQFSLLYNESLQVKTQLDEARGLLLATKNSHLRHIEHMESDELGLQKKLRTEVIQLEDTLAQVRKEYEMLRIEFEQNLAANEQAGPINREMRHLISSLQNHNHQLKGDAQRYKRKLREVQAEIGKLRAQTSGSTHSTPNLGHPEDSGLSAPAPGKEEGGPGPVSTPDNRKEMAPVPGTTTTTTSVKKEELVPSEEDVQGLTLGAQGPSSRGREPEARPKRELREREGPGLGPPPVASALSRADREKAKVEEAKRKESELLKGLRAELKKAQESQKEMKLLLDMYKSAPKEQRDKVQLMAAERKAKAEVDELRSRIRELEERDRRESKKIADGDALRRIRQAEEQIEHLQRKLGATKQEEEALLSEMDVTGQAFEDMQEQNGRLLQQLREKDDANFKLMSERIKANQIHKLLREEKDELGEQVLGLKSQVDAQLLTVQKLEEKERALQGSLGGVEKELTLRSQALELNKRKAVEAAQLAEDLKVQLEHVQTRLREIQPCLAESRAAREKESFNLKRAQEDISRLRRKLEKQRKVEVYADADEILQEEIKEYKARLTCPCCNTRKKDAVLTKCFHVFCFECVRGRYEARQRKCPKCNAAFGAHDFHRIYIS.

A disordered region spans residues Met1–Thr31. Residues Pro18–Thr28 are compositionally biased toward basic and acidic residues. N6-acetyllysine is present on Lys20. Ser42 is subject to Phosphoserine. The stretch at Glu45–Leu91 forms a coiled coil. The tract at residues Gly116–Pro149 is disordered. Coiled-coil stretches lie at residues Ala228 to Leu377 and Leu437 to Ser523. Lys355 and Lys517 each carry N6-acetyllysine. The tract at residues Gly516–Arg646 is disordered. The span at Ala520–Asn531 shows a compositional bias: polar residues. The residue at position 528 (Ser528) is a Phosphoserine. Residues Lys578 and Lys579 each participate in a glycyl lysine isopeptide (Lys-Gly) (interchain with G-Cter in SUMO2) cross-link. Ser585 carries the post-translational modification Phosphoserine. 2 stretches are compositionally biased toward basic and acidic residues: residues Arg602–Gly619 and Arg633–Arg646. Residues Val627–Leu946 are a coiled coil. The segment at Cys948–Asn987 adopts an RING-type zinc-finger fold.

It belongs to the BRE1 family. As to quaternary structure, component of the RNF20/40 complex (also known as BRE1 complex) probably composed of 2 copies of RNF20/BRE1A and 2 copies of RNF40/BRE1B. Interacts with UBE2E1/UBCH6. Interacts with RB1 and WAC.

The protein resides in the nucleus. It carries out the reaction S-ubiquitinyl-[E2 ubiquitin-conjugating enzyme]-L-cysteine + [acceptor protein]-L-lysine = [E2 ubiquitin-conjugating enzyme]-L-cysteine + N(6)-ubiquitinyl-[acceptor protein]-L-lysine.. It participates in protein modification; protein ubiquitination. Component of the RNF20/40 E3 ubiquitin-protein ligase complex that mediates monoubiquitination of 'Lys-120' of histone H2B (H2BK120ub1). H2BK120ub1 gives a specific tag for epigenetic transcriptional activation and is also prerequisite for histone H3 'Lys-4' and 'Lys-79' methylation (H3K4me and H3K79me, respectively). It thereby plays a central role in histone code and gene regulation. The RNF20/40 complex forms a H2B ubiquitin ligase complex in cooperation with the E2 enzyme UBE2A or UBE2B; reports about the cooperation with UBE2E1/UBCH are contradictory. Required for transcriptional activation of Hox genes. The sequence is that of E3 ubiquitin-protein ligase BRE1B (RNF40) from Macaca fascicularis (Crab-eating macaque).